The primary structure comprises 360 residues: Phospho-N-acetylmuramoyl-pentapeptide-transferase (360 aa).

Helical transmembrane passes span 21–41, 73–93, 97–117, 134–154, 168–188, 199–219, 239–259, 263–283, 288–308, and 338–358; these read YLTL…ILIG, TMGG…WADL, YVLV…VDDY, YFWQ…SATM, VFPQ…VGTS, GLAI…AYVT, LVIV…FNTY, VFMG…LAVL, LVLI…ILQV, and VIVR…ATLK.

It belongs to the glycosyltransferase 4 family. MraY subfamily. Mg(2+) is required as a cofactor.

The protein resides in the cell inner membrane. It catalyses the reaction UDP-N-acetyl-alpha-D-muramoyl-L-alanyl-gamma-D-glutamyl-meso-2,6-diaminopimeloyl-D-alanyl-D-alanine + di-trans,octa-cis-undecaprenyl phosphate = di-trans,octa-cis-undecaprenyl diphospho-N-acetyl-alpha-D-muramoyl-L-alanyl-D-glutamyl-meso-2,6-diaminopimeloyl-D-alanyl-D-alanine + UMP. It functions in the pathway cell wall biogenesis; peptidoglycan biosynthesis. Its function is as follows. Catalyzes the initial step of the lipid cycle reactions in the biosynthesis of the cell wall peptidoglycan: transfers peptidoglycan precursor phospho-MurNAc-pentapeptide from UDP-MurNAc-pentapeptide onto the lipid carrier undecaprenyl phosphate, yielding undecaprenyl-pyrophosphoryl-MurNAc-pentapeptide, known as lipid I. The chain is Phospho-N-acetylmuramoyl-pentapeptide-transferase from Alteromonas mediterranea (strain DSM 17117 / CIP 110805 / LMG 28347 / Deep ecotype).